The sequence spans 248 residues: Myelin protein P0 (248 aa).

A signal peptide spans 1–29 (MAPGAPSSSPSPILAALLFSSLVLSPTLA). The Ig-like V-type domain occupies 30-143 (IVVYTDREVY…DIVGKTSQVT (114 aa)). The Extracellular portion of the chain corresponds to 30-153 (IVVYTDREVY…LYVFEKVPTR (124 aa)). Cys-50 and Cys-127 are oxidised to a cystine. N-linked (GlcNAc...) (complex) asparagine glycosylation occurs at Asn-122. Residues 154–179 (YGVVLGAVIGGILGVVLLLLLLFYLI) traverse the membrane as a helical segment. The Cytoplasmic segment spans residues 180 to 248 (RYCWLRRQAA…GLGESRKDKK (69 aa)). Ser-210 bears the Phosphoserine; by PKC mark. Residues 222-248 (MLDHSRSTKAASEKKSKGLGESRKDKK) form a disordered region. The segment covering 224-248 (DHSRSTKAASEKKSKGLGESRKDKK) has biased composition (basic and acidic residues). Phosphoserine occurs at positions 226 and 228. Ser-233 is subject to Phosphoserine; by PKC. Ser-237 bears the Phosphoserine mark. Phosphoserine; by PKC is present on Ser-243.

The protein belongs to the myelin P0 protein family. Homodimer and homotetramer. Post-translationally, N-glycosylated; contains sulfate-substituted glycan. Found only in peripheral nervous system Schwann cells.

The protein localises to the cell membrane. Is an adhesion molecule necessary for normal myelination in the peripheral nervous system. It mediates adhesion between adjacent myelin wraps and ultimately drives myelin compaction. The polypeptide is Myelin protein P0 (Mpz) (Rattus norvegicus (Rat)).